The sequence spans 132 residues: Interleukin-5 (132 aa).

A signal peptide spans 1–19 (MRMLLCLNVLTLSCVWAIA). N-linked (GlcNAc...) asparagine glycosylation is found at asparagine 45, asparagine 74, and asparagine 88.

This sequence belongs to the IL-5 family. Homodimer; disulfide-linked. Interacts with IL5RA. Interacts with CSF2RB.

It localises to the secreted. Its function is as follows. Homodimeric cytokine expressed predominantly by T-lymphocytes and NK cells that plays an important role in the survival, differentiation, and chemotaxis of eosinophils. Acts also on activated and resting B-cells to induce immunoglobulin production, growth, and differentiation. Mechanistically, exerts its biological effects through a receptor composed of IL5RA subunit and the cytokine receptor common subunit beta/CSF2RB. Binding to the receptor leads to activation of various kinases including LYN, SYK and JAK2 and thereby propagates signals through the RAS-MAPK and JAK-STAT5 pathways respectively. The protein is Interleukin-5 (Il5) of Rattus norvegicus (Rat).